Reading from the N-terminus, the 196-residue chain is DnaA initiator-associating protein DiaA (196 aa).

In terms of domain architecture, SIS spans 34–196 (LVQSLLNGNK…DNTLFPHQND (163 aa)).

The protein belongs to the SIS family. DiaA subfamily. As to quaternary structure, homotetramer; dimer of dimers.

Its function is as follows. Required for the timely initiation of chromosomal replication via direct interactions with the DnaA initiator protein. The protein is DnaA initiator-associating protein DiaA of Yersinia pestis bv. Antiqua (strain Antiqua).